A 311-amino-acid chain; its full sequence is Putative S-adenosyl-L-methionine-dependent methyltransferase MSMEG_0095/MSMEI_0092 (311 aa).

Residues Asp134 and 163–164 (DL) each bind S-adenosyl-L-methionine.

Belongs to the UPF0677 family.

Exhibits S-adenosyl-L-methionine-dependent methyltransferase activity. The chain is Putative S-adenosyl-L-methionine-dependent methyltransferase MSMEG_0095/MSMEI_0092 from Mycolicibacterium smegmatis (strain ATCC 700084 / mc(2)155) (Mycobacterium smegmatis).